A 117-amino-acid chain; its full sequence is Transcription elongation factor SPT4 (117 aa).

An N-acetylalanine modification is found at Ala2. Residues 2-40 (ALETVPKDLRHLRACLLCSLVKTIDQFEYDGCDNCDAYL) form an interaction with SUPT5H region. Residues Cys16, Cys19, Cys33, and Cys36 each contribute to the Zn(2+) site. The segment at 16-36 (CLLCSLVKTIDQFEYDGCDNC) adopts a C4-type zinc-finger fold.

Belongs to the SPT4 family. Interacts with SUPT5H to form DSIF. DSIF interacts with the positive transcription elongation factor b complex (P-TEFb complex), which is composed of CDK9 and cyclin-T (CCNT1 or CCNT2). DSIF interacts with RNA polymerase II, and this interaction is reduced by phosphorylation of the C-terminal domain (CTD) of POLR2A by P-TEFb. DSIF also interacts with the NELF complex, which is composed of NELFA, NELFB, NELFD and NELFE, and this interaction occurs following prior binding of DSIF to RNA polymerase II. DSIF also interacts with PRMT1/HRMT1L2, TATSF1, RNGTT/CAP1A, PRMT5/SKB1, SUPT6H, and can interact with PIN1. In terms of processing, ubiquitinated by UBR5 when not assembled in the DSIF complex, leading to its degradation: UBR5 recognizes and binds a degron that is not accessible when SUPT4H1 is part of the DSIF complex.

The protein resides in the nucleus. Functionally, component of the DRB sensitivity-inducing factor complex (DSIF complex), which regulates mRNA processing and transcription elongation by RNA polymerase II. DSIF positively regulates mRNA capping by stimulating the mRNA guanylyltransferase activity of RNGTT/CAP1A. DSIF also acts cooperatively with the negative elongation factor complex (NELF complex) to enhance transcriptional pausing at sites proximal to the promoter. Transcriptional pausing may facilitate the assembly of an elongation competent RNA polymerase II complex. DSIF and NELF promote pausing by inhibition of the transcription elongation factor TFIIS/S-II. TFIIS/S-II binds to RNA polymerase II at transcription pause sites and stimulates the weak intrinsic nuclease activity of the enzyme. Cleavage of blocked transcripts by RNA polymerase II promotes the resumption of transcription from the new 3' terminus and may allow repeated attempts at transcription through natural pause sites. This chain is Transcription elongation factor SPT4 (SUPT4H1), found in Pongo abelii (Sumatran orangutan).